Here is a 249-residue protein sequence, read N- to C-terminus: (2S)-[(R)-hydroxy(phenyl)methyl]succinyl-CoA dehydrogenase subunit BbsC (249 aa).

It belongs to the short-chain dehydrogenases/reductases (SDR) family. As to quaternary structure, heterotetramer composed of 2 inactive BbsC subunits and 2 active BbsD subunits.

The protein operates within xenobiotic degradation; toluene degradation. Involved in an anaerobic toluene degradation pathway. Catalytically inactive subunit, which is probably required for the structural and/or regulatory integrity of the catalytic subunit BbsD. This subunit cannot bind NAD(+) or substrate. The chain is (2S)-[(R)-hydroxy(phenyl)methyl]succinyl-CoA dehydrogenase subunit BbsC from Thauera aromatica.